The chain runs to 244 residues: Diablo homolog, mitochondrial (244 aa).

Residues 1–38 (MASLPRRLIWSFSYILRESFPIVSRRNCVSLLRASWRK) constitute a mitochondrion transit peptide. Positions 50–54 (AIPVG) match the IAP-binding motif. Residues 207–218 (DEIKRTITEDKG) are compositionally biased toward basic and acidic residues. Residues 207–244 (DEIKRTITEDKGNPPSGGSPRSSLSEEEEIPEAYLRED) form a disordered region. A compositionally biased stretch (low complexity) spans 220–229 (PPSGGSPRSS).

This sequence belongs to the Smac/DIABLO protein family. As to quaternary structure, homodimer.

The protein resides in the mitochondrion. In terms of biological role, promotes apoptosis. Acts by opposing the inhibitory activity of inhibitor of apoptosis proteins (IAP). This is Diablo homolog, mitochondrial from Xenopus tropicalis (Western clawed frog).